The chain runs to 239 residues: Orotidine 5'-phosphate decarboxylase (239 aa).

Residues D10, K32, 59 to 68 (DLKLHDIPNT), T122, R184, Q193, G213, and R214 each bind substrate. Residue K61 is the Proton donor of the active site.

This sequence belongs to the OMP decarboxylase family. Type 1 subfamily. Homodimer.

The enzyme catalyses orotidine 5'-phosphate + H(+) = UMP + CO2. It participates in pyrimidine metabolism; UMP biosynthesis via de novo pathway; UMP from orotate: step 2/2. In terms of biological role, catalyzes the decarboxylation of orotidine 5'-monophosphate (OMP) to uridine 5'-monophosphate (UMP). The chain is Orotidine 5'-phosphate decarboxylase from Geobacillus thermodenitrificans (strain NG80-2).